We begin with the raw amino-acid sequence, 997 residues long: FIP1[III]-like protein (997 aa).

Disordered stretches follow at residues 250 to 272 (ITSNEASRSDVSHSYGSKDLNSV), 289 to 475 (AGSF…ETEG), 534 to 553 (SRSSFDLNQRNSRSSFKEED), and 880 to 900 (QGKVSNQSKKRFSNGGDTIEQ). The span at 261 to 272 (SHSYGSKDLNSV) shows a compositional bias: polar residues. 4 stretches are compositionally biased toward basic and acidic residues: residues 309-323 (TPSDKEMLEKEKEES), 334-346 (SVERESSLGDRIR), 367-379 (ESLKDSATDDQRE), and 388-404 (RLAEHEAISIKRGEDSG). Residues 397–404 (IKRGEDSG) carry the Nuclear localization signal motif. Residues 534-547 (SRSSFDLNQRNSRS) show a composition bias toward polar residues. Residues 930-963 (EIIEEVKGVEIDNERIQESLKKMEKRRERFKGTK) are a coiled coil.

Belongs to the FIP1 family. Component of the cleavage and polyadenylation specificity factor (CPSF) complex. Forms a complex with cleavage and polyadenylation specificity factor (CPSF) subunits CLPS5, FIPS5, PAPS4, PCFS1, CSTF64 and CPSF30.

Its subcellular location is the nucleus. In terms of biological role, component of the cleavage and polyadenylation specificity factor (CPSF) complex that plays a key role in pre-mRNA 3'-end formation, recognizing the AAUAAA signal sequence and interacting with poly(A) polymerase and other factors to bring about cleavage and poly(A) addition. FIP1L1 contributes to poly(A) site recognition and stimulates poly(A) addition. Binds to U-rich RNA sequence elements surrounding the poly(A) site. May act to tether poly(A) polymerase to the CPSF complex. The protein is FIP1[III]-like protein of Arabidopsis thaliana (Mouse-ear cress).